Consider the following 299-residue polypeptide: Protease HtpX homolog (299 aa).

A run of 2 helical transmembrane segments spans residues 7 to 24 and 29 to 46; these read GILM…GALI and GAII…FTFW. His130 serves as a coordination point for Zn(2+). The active site involves Glu131. His134 provides a ligand contact to Zn(2+). Transmembrane regions (helical) follow at residues 145–165 and 174–194; these read VTAT…FFGG and PVGI…AGLV. Glu203 contributes to the Zn(2+) binding site.

This sequence belongs to the peptidase M48B family. Zn(2+) serves as cofactor.

It is found in the cell inner membrane. This is Protease HtpX homolog from Cereibacter sphaeroides (strain ATCC 17025 / ATH 2.4.3) (Rhodobacter sphaeroides).